The chain runs to 629 residues: Phosphatidylinositol-3,5-bisphosphate 3-phosphatase MTMR8 (629 aa).

Residues 126 to 500 (GWKLIDLKVD…FSFQFWCGMY (375 aa)) form the Myotubularin phosphatase domain. 3 residues coordinate a 1,2-diacyl-sn-glycero-3-phospho-(1D-myo-inositol-3,5-bisphosphate): N250, N275, and I276. A 1,2-diacyl-sn-glycero-3-phospho-(1D-myo-inositol-3-phosphate) contacts are provided by N250, N275, and I276. C338 (phosphocysteine intermediate) is an active-site residue. A 1,2-diacyl-sn-glycero-3-phospho-(1D-myo-inositol-3,5-bisphosphate) is bound by residues S339, D340, G341, W342, D343, R344, K380, and R384. A 1,2-diacyl-sn-glycero-3-phospho-(1D-myo-inositol-3-phosphate)-binding residues include S339, D340, G341, W342, D343, and R344. S339 and D340 together coordinate phosphate. Phosphate contacts are provided by W342, D343, and R344. R384 is an a 1,2-diacyl-sn-glycero-3-phospho-(1D-myo-inositol-3-phosphate) binding site. The stretch at 517 to 543 (LLSCMNQKIKLEDNASELENKLPFLDG) forms a coiled coil.

The protein belongs to the protein-tyrosine phosphatase family. Non-receptor class myotubularin subfamily. Homodimer.

It localises to the nucleus envelope. It catalyses the reaction a 1,2-diacyl-sn-glycero-3-phospho-(1D-myo-inositol-3,5-bisphosphate) + H2O = a 1,2-diacyl-sn-glycero-3-phospho-(1D-myo-inositol-5-phosphate) + phosphate. The catalysed reaction is a 1,2-diacyl-sn-glycero-3-phospho-(1D-myo-inositol-3-phosphate) + H2O = a 1,2-diacyl-sn-glycero-3-phospho-(1D-myo-inositol) + phosphate. The enzyme catalyses 1,2-dioctanoyl-sn-glycero-3-phospho-(1D-myo-inositol-3,5-bisphosphate) + H2O = 1,2-dioctanoyl-sn-glycero-3-phospho-(1D-myo-inositol-5-phosphate) + phosphate. Lipid phosphatase that specifically dephosphorylates the D-3 position of phosphatidylinositol 3-phosphate and phosphatidylinositol 3,5-bisphosphate, generating phosphatidylinositol and phosphatidylinositol 5-phosphate. This is Phosphatidylinositol-3,5-bisphosphate 3-phosphatase MTMR8 from Gallus gallus (Chicken).